A 154-amino-acid chain; its full sequence is Peptide deformylase (154 aa).

Fe cation contacts are provided by C90 and H132. E133 is a catalytic residue. H136 lines the Fe cation pocket.

It belongs to the polypeptide deformylase family. Fe(2+) is required as a cofactor.

It catalyses the reaction N-terminal N-formyl-L-methionyl-[peptide] + H2O = N-terminal L-methionyl-[peptide] + formate. Functionally, removes the formyl group from the N-terminal Met of newly synthesized proteins. Requires at least a dipeptide for an efficient rate of reaction. N-terminal L-methionine is a prerequisite for activity but the enzyme has broad specificity at other positions. The polypeptide is Peptide deformylase (Desulforudis audaxviator (strain MP104C)).